Consider the following 425-residue polypeptide: UPF0597 protein VP2173 (425 aa).

This sequence belongs to the UPF0597 family.

This Vibrio parahaemolyticus serotype O3:K6 (strain RIMD 2210633) protein is UPF0597 protein VP2173.